The primary structure comprises 271 residues: HTH-type transcriptional repressor AllR (271 aa).

An HTH iclR-type domain is found at 21–83; sequence AQALERGIAI…SQLGWWHIGL (63 aa). A DNA-binding region (H-T-H motif) is located at residues 43-62; sequence VSDISLNLDLPLSTTFRLLK. Residues 98–267 enclose the IclR-ED domain; the sequence is VLSVAGPFMR…ARDISTALGL (170 aa). Residues 154–156, Asp207, Cys217, and 234–236 contribute to the glyoxylate site; these read SGA and SIS.

Negative regulator of allantoin and glyoxylate utilization operons. Binds to the gcl promoter and to the allS-allA intergenic region. This chain is HTH-type transcriptional repressor AllR (allR), found in Escherichia coli O6:H1 (strain CFT073 / ATCC 700928 / UPEC).